A 406-amino-acid chain; its full sequence is 4-hydroxy-3-methylbut-2-en-1-yl diphosphate synthase (ferredoxin) (406 aa).

4 residues coordinate [4Fe-4S] cluster: Cys-315, Cys-318, Cys-349, and Glu-356.

This sequence belongs to the IspG family. Requires [4Fe-4S] cluster as cofactor.

It catalyses the reaction (2E)-4-hydroxy-3-methylbut-2-enyl diphosphate + 2 oxidized [2Fe-2S]-[ferredoxin] + H2O = 2-C-methyl-D-erythritol 2,4-cyclic diphosphate + 2 reduced [2Fe-2S]-[ferredoxin] + H(+). The protein operates within isoprenoid biosynthesis; isopentenyl diphosphate biosynthesis via DXP pathway; isopentenyl diphosphate from 1-deoxy-D-xylulose 5-phosphate: step 5/6. Converts 2C-methyl-D-erythritol 2,4-cyclodiphosphate (ME-2,4cPP) into 1-hydroxy-2-methyl-2-(E)-butenyl 4-diphosphate. The protein is 4-hydroxy-3-methylbut-2-en-1-yl diphosphate synthase (ferredoxin) of Microcystis aeruginosa (strain NIES-843 / IAM M-2473).